Reading from the N-terminus, the 308-residue chain is Mitochondrial brown fat uncoupling protein 1 (308 aa).

At 1 to 10 (MVASAEADVP) the chain is on the mitochondrial intermembrane side. The chain crosses the membrane as a helical span at residues 11–33 (PPTMLVKIASAGLSACLADIITF). 3 Solcar repeats span residues 11–103 (PPTM…VQEY), 112–202 (ATLG…LKEA), and 211–296 (DDIP…LKKE). Topologically, residues 34-74 (PLDTAKVRLQVQGERPNAPGVKYKGVLGTIATVAKTEGPLK) are mitochondrial matrix. Position 57 (K57) interacts with fatty acid 16:0. The helical transmembrane segment at 75-97 (LYGGLPAGIQRQISFASLRIGLY) threads the bilayer. Topologically, residues 98 to 117 (DTVQEYFNAHRKTPATLGNK) are mitochondrial intermembrane. Residues 118-134 (ISAGLMTGCVTVFIGQP) form a helical membrane-spanning segment. At 135–179 (TEVAKVRMQAQSSLHWLKPRYSGTYNAYYVIVKTEGFLGLWKGTS) the chain is on the mitochondrial matrix side. A helical transmembrane segment spans residues 180–196 (LNLTRNVIINCTELVVY). Over 197–213 (DVLKEALVKNNVLADDI) the chain is Mitochondrial intermembrane. A helical membrane pass occupies residues 214-233 (PCHLLAALTAGFCTTALASP). The Mitochondrial matrix portion of the chain corresponds to 234–267 (VDVVKTRFINSPPGYYPHVHNCALNMLQKEGLRA). C255 carries the post-translational modification Cysteine sulfenic acid (-SOH). Residues 268 to 290 (FFKGFVPSFLRLGSWTVIMHVTF) form a helical membrane-spanning segment. K270 contacts fatty acid 16:0. The Mitochondrial intermembrane segment spans residues 291 to 308 (EQLKKELMKSRQTVDCAT).

This sequence belongs to the mitochondrial carrier (TC 2.A.29) family. Most probably functions as a monomer. Binds one purine nucleotide per monomer. However, has also been suggested to function as a homodimer or a homotetramer. Tightly associates with cardiolipin in the mitochondrion inner membrane; may stabilize and regulate its activity. In terms of processing, may undergo sulfenylation upon cold exposure. May increase the sensitivity of UCP1 thermogenic function to the activation by noradrenaline probably through structural effects. Post-translationally, may undergo ubiquitin-mediated proteasomal degradation. In terms of tissue distribution, brown adipose tissue.

It is found in the mitochondrion inner membrane. The enzyme catalyses H(+)(in) = H(+)(out). Has no constitutive proton transporter activity and has to be activated by long-chain fatty acids/LCFAs. Inhibited by purine nucleotides. Both purine nucleotides and LCFAs bind the cytosolic side of the transporter and directly compete to activate or inhibit it. Activated by noradrenaline and reactive oxygen species. Despite lacking canonical translational encoding for selenocysteine, a small pool of the protein has been observed to selectively incorporate selenocysteine at 'Cys-255'. Selenocysteine-modified protein is highly sensitive to redox modification and may constitute a pool of protein highly sensitive to activation by elevated levels of reactive oxygen species (ROS). In terms of biological role, mitochondrial protein responsible for thermogenic respiration, a specialized capacity of brown adipose tissue and beige fat that participates in non-shivering adaptive thermogenesis to temperature and diet variations and more generally to the regulation of energy balance. Functions as a long-chain fatty acid/LCFA and proton symporter, simultaneously transporting one LCFA and one proton through the inner mitochondrial membrane. However, LCFAs remaining associated with the transporter via their hydrophobic tails, it results in an apparent transport of protons activated by LCFAs. Thereby, dissipates the mitochondrial proton gradient and converts the energy of substrate oxydation into heat instead of ATP. Regulates the production of reactive oxygen species/ROS by mitochondria. The chain is Mitochondrial brown fat uncoupling protein 1 from Suncus murinus (Asian house shrew).